Here is a 676-residue protein sequence, read N- to C-terminus: RNA helicase NPH-II (676 aa).

The region spanning 172–347 (FSAWISHRPV…VFLPNPAFIH (176 aa)) is the Helicase ATP-binding domain. 185 to 192 (GGTGVGKT) serves as a coordination point for ATP. The DEXH box motif lies at 296–299 (DEVH). Residues 366–542 (NPSSRMAYIE…KFNLTLPEDL (177 aa)) enclose the Helicase C-terminal domain.

It belongs to the DEAD box helicase family. DEAH subfamily. In terms of assembly, monomer.

It localises to the virion. It carries out the reaction ATP + H2O = ADP + phosphate + H(+). NTP-dependent helicase that catalyzes unidirectional unwinding of 3'tailed duplex RNAs and plays an important role during transcription of early mRNAs, presumably by preventing R-loop formation behind the elongating RNA polymerase. Might also play a role in the export of newly synthesized mRNA chains out of the core into the cytoplasm. Required for replication and propagation of viral particles. This chain is RNA helicase NPH-II (OPG084), found in Homo sapiens (Human).